Consider the following 289-residue polypeptide: ATP synthase gamma chain (289 aa).

The protein belongs to the ATPase gamma chain family. F-type ATPases have 2 components, CF(1) - the catalytic core - and CF(0) - the membrane proton channel. CF(1) has five subunits: alpha(3), beta(3), gamma(1), delta(1), epsilon(1). CF(0) has three main subunits: a, b and c.

Its subcellular location is the cell membrane. Produces ATP from ADP in the presence of a proton gradient across the membrane. The gamma chain is believed to be important in regulating ATPase activity and the flow of protons through the CF(0) complex. This is ATP synthase gamma chain from Hamiltonella defensa subsp. Acyrthosiphon pisum (strain 5AT).